A 442-amino-acid chain; its full sequence is MKFFIEKNKKNTDRVTINIPKKIVSNELIREFIEINKKTKINGFRKGKTPIKIIQEKYGNRVYYDVFNQLMQKFFYEFIKKEKIKIIGLPKYVMHENEDQKEYFKYSVNYEVYPKFEIKDVNLIKVEKIIVNIKDEDVKKNIEKTASYEKDIWNKVNRAIKTNDLVTINYCIYENNKKLDKFNVEKFKFIVSQNNFIPELNNKLINHFTNDVIFFKINFCKFHPEEELQGKDITFKIKILNVEEKQENIEIEKNIKTIKINKLSKLNYQTIKNNIIEKIKSLTQNHLQNQIIKQLIIKNPINIPPTLLREETNFLRNKFIKEYKEKQENILKKKYHTNLESKAKTRLHIKLIIEKIIRDNKISVNEEKVDLLIKKISLKYKKPLEIINIYKKNTMLRKTIKNIELEMQVMQFLIKKVKIIEKNWTLDEIMNYNWKNNEELFA.

Positions 163-248 (NDLVTINYCI…ILNVEEKQEN (86 aa)) constitute a PPIase FKBP-type domain.

It belongs to the FKBP-type PPIase family. Tig subfamily.

The protein localises to the cytoplasm. It catalyses the reaction [protein]-peptidylproline (omega=180) = [protein]-peptidylproline (omega=0). Involved in protein export. Acts as a chaperone by maintaining the newly synthesized protein in an open conformation. Functions as a peptidyl-prolyl cis-trans isomerase. The protein is Trigger factor of Buchnera aphidicola subsp. Schizaphis graminum (strain Sg).